Here is a 391-residue protein sequence, read N- to C-terminus: Cytochrome b (391 aa).

A run of 4 helical transmembrane segments spans residues 33 to 53 (FGSLLSLCLALQILTGLFLAM), 77 to 98 (WLIRSIHANGASFFFICIYLHI), 113 to 133 (WSAGVILLLLVMMTAFVGYVL), and 178 to 198 (FFAFHFLFPFGIIAMTLVHLL). Heme b-binding residues include histidine 83 and histidine 97. Heme b-binding residues include histidine 182 and histidine 196. Histidine 201 contributes to the a ubiquinone binding site. A run of 4 helical transmembrane segments spans residues 226–246 (YKDLIGFAWFALFLITLVLFI), 288–308 (LGGVFALLASILILLIVPILH), 320–340 (LAQIFMGLLVVDVAILTWIGG), and 347–367 (FIIIGQIASFLYFFLFLVFFP).

Belongs to the cytochrome b family. The cytochrome bc1 complex contains 3 respiratory subunits (MT-CYB, CYC1 and UQCRFS1), 2 core proteins (UQCRC1 and UQCRC2) and probably 6 low-molecular weight proteins. Requires heme b as cofactor.

It is found in the mitochondrion inner membrane. Component of the ubiquinol-cytochrome c reductase complex (complex III or cytochrome b-c1 complex) that is part of the mitochondrial respiratory chain. The b-c1 complex mediates electron transfer from ubiquinol to cytochrome c. Contributes to the generation of a proton gradient across the mitochondrial membrane that is then used for ATP synthesis. The sequence is that of Cytochrome b (mt-cyb) from Kryptolebias marmoratus (Mangrove killifish).